Reading from the N-terminus, the 929-residue chain is Isoleucine--tRNA ligase (929 aa).

The 'HIGH' region motif lies at 58 to 68 (PYANGDIHIGH). E568 contacts L-isoleucyl-5'-AMP. Residues 609–613 (KMSKS) carry the 'KMSKS' region motif. K612 contacts ATP. Zn(2+) contacts are provided by C892, C895, C912, and C915.

Belongs to the class-I aminoacyl-tRNA synthetase family. IleS type 1 subfamily. In terms of assembly, monomer. Zn(2+) serves as cofactor.

The protein resides in the cytoplasm. It catalyses the reaction tRNA(Ile) + L-isoleucine + ATP = L-isoleucyl-tRNA(Ile) + AMP + diphosphate. In terms of biological role, catalyzes the attachment of isoleucine to tRNA(Ile). As IleRS can inadvertently accommodate and process structurally similar amino acids such as valine, to avoid such errors it has two additional distinct tRNA(Ile)-dependent editing activities. One activity is designated as 'pretransfer' editing and involves the hydrolysis of activated Val-AMP. The other activity is designated 'posttransfer' editing and involves deacylation of mischarged Val-tRNA(Ile). The chain is Isoleucine--tRNA ligase from Thiobacillus denitrificans (strain ATCC 25259 / T1).